Consider the following 255-residue polypeptide: 20 kDa chaperonin, chloroplastic (255 aa).

Residues 1 to 53 (MAATHLTSTSSLTINTLPSFEGLRSASGISKINVSVAYPSFTSRSFRGLVVRA) constitute a chloroplast transit peptide. 2 cpn-10 domain regions span residues 54-156 (ASIT…ILET) and 157-255 (DDVK…AVLS).

Belongs to the GroES chaperonin family. Forms stable complexes with CPN60 in the presence of ATP.

Its subcellular location is the plastid. The protein resides in the chloroplast. Its function is as follows. Seems to function only as a co-chaperone, along with cpn60, and in certain cases is essential for the discharge of biologically active proteins from cpn60. This chain is 20 kDa chaperonin, chloroplastic (CPN21), found in Spinacia oleracea (Spinach).